Here is a 492-residue protein sequence, read N- to C-terminus: Ammonium transporter MEP1 (492 aa).

The Extracellular segment spans residues 1 to 18 (MESRTTGPLTTETYDGPT). Residues 19–39 (VAFMILGAALVFFMVPGLGFL) traverse the membrane as a helical segment. At 40 to 49 (YSGLARRKSA) the chain is on the cytoplasmic side. Residues 50–70 (LALIWVVLMATLVGILQWYFW) traverse the membrane as a helical segment. Topologically, residues 71 to 109 (GYSLAFSKSAPNNKFIGNLDSFGFRNVYGKKFDEDAYPE) are extracellular. The helical transmembrane segment at 110–130 (LAYATFQMMFSCVNLSIIAGA) threads the bilayer. Residues 131–140 (TAERGRLLPH) are Cytoplasmic-facing. Residues 141–161 (MVFLFILATIGYCPVTYWIWS) form a helical membrane-spanning segment. Residues 162–174 (PGGWAYQWGVLDW) lie on the Extracellular side of the membrane. The helical transmembrane segment at 175–195 (AGGGNIEILSAVSGFVYSWFL) threads the bilayer. Residues 196 to 210 (GKRNEKLLINFRPHN) lie on the Cytoplasmic side of the membrane. Residues 211–231 (VSLVTLGTSILWFGWLLFNSA) traverse the membrane as a helical segment. Residues 232–240 (SSLSPNLRS) lie on the Extracellular side of the membrane. Residues 241-261 (VYAFMNTCLSAITGGMTWCLL) traverse the membrane as a helical segment. Over 262–268 (DYRSEKK) the chain is Cytoplasmic. Residues 269 to 289 (WSTVGLCSGIISGLVAATPSS) form a helical membrane-spanning segment. A topological domain (extracellular) is located at residue Gly-290. The helical transmembrane segment at 291-311 (CITLYGSLIQGIVAGVVCNFA) threads the bilayer. The Cytoplasmic portion of the chain corresponds to 312-331 (TKLKYYAKVDDAMDILAEHG). Residues 332–352 (VAGVIGLIFNALFGADWVIGM) traverse the membrane as a helical segment. The Extracellular segment spans residues 353 to 373 (DGTTEHEGGWVTHNYKQMYKQ). The chain crosses the membrane as a helical span at residues 374-394 (IAYIAASIGYTAAVTAIICFV). Residues 395-492 (LGYIPGMRLR…PIHQEDPANR (98 aa)) are Cytoplasmic-facing. A phosphoserine mark is found at Ser-442 and Ser-445. The disordered stretch occupies residues 455–492 (HLAAERSSSGTNSSSDGNGEMIQSEKILPIHQEDPANR). Residues 461–473 (SSSGTNSSSDGNG) show a composition bias toward low complexity.

Belongs to the ammonia transporter channel (TC 1.A.11.2) family.

Its subcellular location is the membrane. In terms of biological role, transporter for ammonium (both charged and uncharged NH3 and NH4) to use as a nitrogen source. Can also transport methylamine. The affinity of MEP1 is about twenty times lower than that of MEP2. MEP3 has the lowest affinity. This Saccharomyces cerevisiae (strain ATCC 204508 / S288c) (Baker's yeast) protein is Ammonium transporter MEP1 (MEP1).